The primary structure comprises 287 residues: Probable ribosomal RNA small subunit methyltransferase A (287 aa).

Positions 29, 31, 56, 77, 102, and 117 each coordinate S-adenosyl-L-methionine.

This sequence belongs to the class I-like SAM-binding methyltransferase superfamily. rRNA adenine N(6)-methyltransferase family. RsmA subfamily.

The protein resides in the cytoplasm. In terms of biological role, specifically dimethylates two adjacent adenosines in the loop of a conserved hairpin near the 3'-end of 16S rRNA in the 30S particle. May play a critical role in biogenesis of 30S subunits. This Methanosarcina barkeri (strain Fusaro / DSM 804) protein is Probable ribosomal RNA small subunit methyltransferase A.